A 249-amino-acid chain; its full sequence is Putative TrmH family tRNA/rRNA methyltransferase (249 aa).

Residues glycine 196, isoleucine 216, and leucine 225 each contribute to the S-adenosyl-L-methionine site.

The protein belongs to the class IV-like SAM-binding methyltransferase superfamily. RNA methyltransferase TrmH family.

This is Putative TrmH family tRNA/rRNA methyltransferase from Staphylococcus epidermidis (strain ATCC 35984 / DSM 28319 / BCRC 17069 / CCUG 31568 / BM 3577 / RP62A).